A 293-amino-acid polypeptide reads, in one-letter code: Ribosomal protein L11 methyltransferase (293 aa).

Residues threonine 145, glycine 166, aspartate 188, and asparagine 230 each contribute to the S-adenosyl-L-methionine site.

The protein belongs to the methyltransferase superfamily. PrmA family.

Its subcellular location is the cytoplasm. The catalysed reaction is L-lysyl-[protein] + 3 S-adenosyl-L-methionine = N(6),N(6),N(6)-trimethyl-L-lysyl-[protein] + 3 S-adenosyl-L-homocysteine + 3 H(+). Functionally, methylates ribosomal protein L11. The polypeptide is Ribosomal protein L11 methyltransferase (Shewanella baltica (strain OS223)).